Reading from the N-terminus, the 78-residue chain is Small ribosomal subunit protein eS17 (78 aa).

It belongs to the eukaryotic ribosomal protein eS17 family.

The chain is Small ribosomal subunit protein eS17 from Sulfurisphaera tokodaii (strain DSM 16993 / JCM 10545 / NBRC 100140 / 7) (Sulfolobus tokodaii).